The primary structure comprises 442 residues: Interferon-related developmental regulator 2 (442 aa).

Residues 1 to 15 (MPRARKGNTLRKGGQ) show a composition bias toward basic residues. The disordered stretch occupies residues 1-71 (MPRARKGNTL…DVVDEQGQQE (71 aa)). The segment covering 43–56 (TASECPSLLSTTAE) has biased composition (polar residues).

Belongs to the IFRD family. Associates with ribosomes; promoting ribosome inactivation. As to expression, expressed in many tissues including heart, brain, placenta, lung, liver, skeletal muscle, kidney and pancreas.

Functionally, ribosome-binding protein that acts as an inhibitor of mRNA translation by promoting ribosome inactivation. Associates with the P- and E-sites of the ribosome and inserts a C-terminal helix into the mRNA exit channel to preclude translation. The chain is Interferon-related developmental regulator 2 from Homo sapiens (Human).